The primary structure comprises 671 residues: UvrABC system protein B (671 aa).

The region spanning 31–189 (KGFEEGKKEQ…QLVDIQFDRN (159 aa)) is the Helicase ATP-binding domain. 44-51 (GATGTGKT) is an ATP binding site. Residues 97–120 (YYDYYQPEAYVPSTDTYIEKDSAI) carry the Beta-hairpin motif. The region spanning 437-599 (QIDDLVGEIN…ITPKTIIKPI (163 aa)) is the Helicase C-terminal domain. A UVR domain is found at 634–669 (KELVANLRSQMQAAAKKLDFEQAASLRDTILELQAD).

Belongs to the UvrB family. In terms of assembly, forms a heterotetramer with UvrA during the search for lesions. Interacts with UvrC in an incision complex.

The protein resides in the cytoplasm. Its function is as follows. The UvrABC repair system catalyzes the recognition and processing of DNA lesions. A damage recognition complex composed of 2 UvrA and 2 UvrB subunits scans DNA for abnormalities. Upon binding of the UvrA(2)B(2) complex to a putative damaged site, the DNA wraps around one UvrB monomer. DNA wrap is dependent on ATP binding by UvrB and probably causes local melting of the DNA helix, facilitating insertion of UvrB beta-hairpin between the DNA strands. Then UvrB probes one DNA strand for the presence of a lesion. If a lesion is found the UvrA subunits dissociate and the UvrB-DNA preincision complex is formed. This complex is subsequently bound by UvrC and the second UvrB is released. If no lesion is found, the DNA wraps around the other UvrB subunit that will check the other stand for damage. In Lacticaseibacillus casei (strain BL23) (Lactobacillus casei), this protein is UvrABC system protein B.